The primary structure comprises 138 residues: Transcription antitermination protein NusB (138 aa).

It belongs to the NusB family.

In terms of biological role, involved in transcription antitermination. Required for transcription of ribosomal RNA (rRNA) genes. Binds specifically to the boxA antiterminator sequence of the ribosomal RNA (rrn) operons. The polypeptide is Transcription antitermination protein NusB (Blochmanniella floridana).